The following is a 513-amino-acid chain: Acyltransferase uat1 (513 aa).

Catalysis depends on His158, which acts as the Proton acceptor.

It belongs to the plant acyltransferase family.

The protein operates within secondary metabolite biosynthesis. In terms of biological role, acyltransferase; part of the gene cluster that mediates the biosynthesis of the glycolipid biosurfactant ustilagic acid (UA). UA is a secreted cellobiose glycolipid that is toxic for many microorganisms and confers biocontrol activity to U.maydis. UA consists of 15,16-dihydroxypalmitic or 2,15,16-trihydroxypalmitic acid, which is O-glycosidically linked to cellobiose at its terminal hydroxyl group. In addition, the cellobiose moiety is acetylated and acylated with a short-chain hydroxy fatty acid. UA biosynthesis starts with omega-hydroxylation of palmitic acid catalyzed by the cytochrome P450 monooxygenase cyp1. Terminal hydroxylation of palmitic acid precedes subterminal hydroxylation catalyzed by the cytochrome P450 monooxygenase cyp2. Sequential glucosylation of the hydroxy fatty acid is probably catalyzed by the glycosyltransferase ugt1. The cellobiose lipid is further decorated by acetylation of the proximal glucose residue and by acylation with a short-chain beta-hydroxy fatty acid at the distal glucose residue. The acyltransferase uat1 may be a good candidate for catalyzing either acetylation or acylation of the cellobiose lipid. The fatty acid synthase fas2 may be involved in synthesis of the carbon backbone of the short-chain beta-hydroxy fatty acid esterified to the cellobiose disaccharide. The secreted UA consists of a mixture of both alpha-hydroxylated and non-hydroxylated glycolipids; therefore, alpha-hydroxylation of the long-chain fatty, catalyzed by the fatty acid hydroxylase ahd1, occurs late in UA biosynthesis and may be the last step before secretion. The polypeptide is Acyltransferase uat1 (Mycosarcoma maydis (Corn smut fungus)).